The chain runs to 555 residues: Glutamate--tRNA ligase (555 aa).

Positions 103–113 match the 'HIGH' region motif; the sequence is PNPSGPLHIGH.

The protein belongs to the class-I aminoacyl-tRNA synthetase family. Glutamate--tRNA ligase type 2 subfamily.

It is found in the cytoplasm. The enzyme catalyses tRNA(Glu) + L-glutamate + ATP = L-glutamyl-tRNA(Glu) + AMP + diphosphate. Functionally, catalyzes the attachment of glutamate to tRNA(Glu) in a two-step reaction: glutamate is first activated by ATP to form Glu-AMP and then transferred to the acceptor end of tRNA(Glu). This Methanobrevibacter smithii (strain ATCC 35061 / DSM 861 / OCM 144 / PS) protein is Glutamate--tRNA ligase.